Here is a 112-residue protein sequence, read N- to C-terminus: UPF0342 protein SPP_1392 (112 aa).

This sequence belongs to the UPF0342 family.

This Streptococcus pneumoniae (strain P1031) protein is UPF0342 protein SPP_1392.